A 341-amino-acid chain; its full sequence is tRNA N6-adenosine threonylcarbamoyltransferase (341 aa).

The Fe cation site is built by H111 and H115. Substrate-binding positions include 134–138 (LVSGG), D167, G180, and N276. D304 contacts Fe cation.

This sequence belongs to the KAE1 / TsaD family. Fe(2+) serves as cofactor.

It localises to the cytoplasm. It carries out the reaction L-threonylcarbamoyladenylate + adenosine(37) in tRNA = N(6)-L-threonylcarbamoyladenosine(37) in tRNA + AMP + H(+). Its function is as follows. Required for the formation of a threonylcarbamoyl group on adenosine at position 37 (t(6)A37) in tRNAs that read codons beginning with adenine. Is involved in the transfer of the threonylcarbamoyl moiety of threonylcarbamoyl-AMP (TC-AMP) to the N6 group of A37, together with TsaE and TsaB. TsaD likely plays a direct catalytic role in this reaction. This Pseudomonas putida (strain W619) protein is tRNA N6-adenosine threonylcarbamoyltransferase.